Consider the following 427-residue polypeptide: 3-phosphoshikimate 1-carboxyvinyltransferase (427 aa).

K22, S23, and R27 together coordinate 3-phosphoshikimate. K22 provides a ligand contact to phosphoenolpyruvate. Phosphoenolpyruvate contacts are provided by G96 and R124. Residues S169, S170, Q171, S197, D313, N336, and K340 each contribute to the 3-phosphoshikimate site. A phosphoenolpyruvate-binding site is contributed by Q171. The active-site Proton acceptor is the D313. R344, R386, and K411 together coordinate phosphoenolpyruvate.

It belongs to the EPSP synthase family. Monomer.

The protein resides in the cytoplasm. It carries out the reaction 3-phosphoshikimate + phosphoenolpyruvate = 5-O-(1-carboxyvinyl)-3-phosphoshikimate + phosphate. It functions in the pathway metabolic intermediate biosynthesis; chorismate biosynthesis; chorismate from D-erythrose 4-phosphate and phosphoenolpyruvate: step 6/7. Its function is as follows. Catalyzes the transfer of the enolpyruvyl moiety of phosphoenolpyruvate (PEP) to the 5-hydroxyl of shikimate-3-phosphate (S3P) to produce enolpyruvyl shikimate-3-phosphate and inorganic phosphate. This is 3-phosphoshikimate 1-carboxyvinyltransferase from Shigella dysenteriae.